A 999-amino-acid chain; its full sequence is uncharacterized protein (999 aa).

Residues 45–128 are compositionally biased toward low complexity; sequence NSNNIGNGNG…TPTITPSSPS (84 aa). The interval 45–129 is disordered; it reads NSNNIGNGNG…PTITPSSPSV (85 aa). Residues 723–767 adopt a coiled-coil conformation; the sequence is YQQSQQQQSQQQQQQQQQQQQQQQQQQQQQQQQQQQQQQQQQQQQ. Over residues 873-887 the composition is skewed to low complexity; that stretch reads NDINNANNSNNNNNN. Residues 873–904 are disordered; the sequence is NDINNANNSNNNNNNQSQVLLSPNRNKDGTLN. A helical membrane pass occupies residues 976–996; it reads LFSLVLILAFIWFFFEIYFFF.

Its subcellular location is the membrane. This is an uncharacterized protein from Dictyostelium discoideum (Social amoeba).